Here is a 711-residue protein sequence, read N- to C-terminus: Methionine--tRNA ligase (711 aa).

The 'HIGH' region motif lies at 15 to 25 (PYTNGPIHIGH). Positions 147, 150, 160, and 163 each coordinate Zn(2+). The short motif at 336–340 (KLSTS) is the 'KMSKS' region element. Thr-339 lines the ATP pocket. One can recognise a tRNA-binding domain in the interval 610 to 711 (DFAKMDIRIG…ADAPNGATVN (102 aa)).

It belongs to the class-I aminoacyl-tRNA synthetase family. MetG type 1 subfamily. In terms of assembly, homodimer. Requires Zn(2+) as cofactor.

The protein localises to the cytoplasm. The enzyme catalyses tRNA(Met) + L-methionine + ATP = L-methionyl-tRNA(Met) + AMP + diphosphate. Its function is as follows. Is required not only for elongation of protein synthesis but also for the initiation of all mRNA translation through initiator tRNA(fMet) aminoacylation. This Flavobacterium johnsoniae (strain ATCC 17061 / DSM 2064 / JCM 8514 / BCRC 14874 / CCUG 350202 / NBRC 14942 / NCIMB 11054 / UW101) (Cytophaga johnsonae) protein is Methionine--tRNA ligase.